The following is a 383-amino-acid chain: Succinyl-diaminopimelate desuccinylase (383 aa).

His-74 contributes to the Zn(2+) binding site. Asp-76 is a catalytic residue. A Zn(2+)-binding site is contributed by Asp-107. Glu-141 (proton acceptor) is an active-site residue. Positions 142, 170, and 356 each coordinate Zn(2+).

The protein belongs to the peptidase M20A family. DapE subfamily. As to quaternary structure, homodimer. Requires Zn(2+) as cofactor. It depends on Co(2+) as a cofactor.

The catalysed reaction is N-succinyl-(2S,6S)-2,6-diaminopimelate + H2O = (2S,6S)-2,6-diaminopimelate + succinate. It participates in amino-acid biosynthesis; L-lysine biosynthesis via DAP pathway; LL-2,6-diaminopimelate from (S)-tetrahydrodipicolinate (succinylase route): step 3/3. In terms of biological role, catalyzes the hydrolysis of N-succinyl-L,L-diaminopimelic acid (SDAP), forming succinate and LL-2,6-diaminopimelate (DAP), an intermediate involved in the bacterial biosynthesis of lysine and meso-diaminopimelic acid, an essential component of bacterial cell walls. This chain is Succinyl-diaminopimelate desuccinylase, found in Ralstonia nicotianae (strain ATCC BAA-1114 / GMI1000) (Ralstonia solanacearum).